The primary structure comprises 541 residues: Tripeptidyl aminopeptidase (541 aa).

Residues M1–A36 form the signal peptide. Positions A37–A39 are excised as a propeptide. One can recognise an AB hydrolase-1 domain in the interval G123–G501. The active-site Nucleophile is S249. D474 is an active-site residue. The active-site Proton donor is the H503.

Belongs to the peptidase S33 family.

It is found in the secreted. Cleaves tripeptides from the N-termini of proteins. Does not cleave mono- or dipeptides, or N-terminally blocked peptides. This is Tripeptidyl aminopeptidase from Streptomyces coelicolor (strain ATCC BAA-471 / A3(2) / M145).